Consider the following 377-residue polypeptide: Guanine nucleotide-binding protein subunit beta (377 aa).

WD repeat units lie at residues 63-93, 105-135, 154-185, 202-233, 246-276, 292-323, and 339-369; these read GHTG…IVWN, LPCA…SIFS, GHRG…ILWD, GHTA…RLWD, GHEG…RLYD, GENG…YVWD, and SHRN…KIWA. 2 consecutive short sequence motifs (DWD box) follow at residues 220–235 and 263–278; these read FISG…WDTR and FGTG…YDIR.

This sequence belongs to the WD repeat G protein beta family. In terms of assembly, g proteins are composed of 3 units, alpha, beta and gamma. Interacts with the gamma subunits GG1 and GG2. The dimers GB1-GG1 and GB1-GG2 interact with NDL1, NDL2 and NDL3. Interacts with WNK8. Interacts with XLG2. Interacts with RACK1A, RACK1B and RACK1C. Interacts with ZAR1 (via GBeta-binding domain). In terms of tissue distribution, expressed in seedlings (especially at the hypocotyl/root junction), roots, leaves (restricted to veins and guard cells), and flowers. Also present in hydathods. Expressed in guard cells, mesophyll tissue of cotyledons, trichomes and whole siliques, but not in seeds.

The protein resides in the cell membrane. It localises to the cytoplasm. It is found in the nucleus. Functionally, guanine nucleotide-binding proteins (G proteins) are involved as a modulator or transducer in various transmembrane signaling systems. The beta and gamma chains are required for the GTPase activity, for replacement of GDP by GTP, and for G protein-effector interaction. The heterotrimeric G-protein controls defense responses to necrotrophic and vascular fungi probably by modulating cell wall-related genes expression (e.g. lower xylose content in cell walls); involved in resistance to fungal pathogens such as Alternaria brassicicola and Fusarium oxysporum. Modulates root architecture (e.g. lateral root formation). Acts with XGL3 in the positive regulation of root waving and root skewing. Involved in the asymmetric division of zygote and specification of apical and basal cell lineages. This chain is Guanine nucleotide-binding protein subunit beta (GB1), found in Arabidopsis thaliana (Mouse-ear cress).